The primary structure comprises 285 residues: HTH-type transcriptional regulator MurR (285 aa).

An HTH rpiR-type domain is found at 1 to 77 (MLYLTKISNA…MALIGEYSAS (77 aa)). Residues 37–56 (SRQMAKQLGISQSSIVKFAQ) constitute a DNA-binding region (H-T-H motif). Positions 128–268 (IIEVISKAPF…FVGLVQLNDV (141 aa)) constitute an SIS domain.

In terms of assembly, homotetramer.

It functions in the pathway amino-sugar metabolism; N-acetylmuramate degradation [regulation]. Its function is as follows. Represses the expression of the murPQ operon involved in the uptake and degradation of N-acetylmuramic acid (MurNAc). Binds to two adjacent inverted repeats within the operator region. MurNAc 6-phosphate, the substrate of MurQ, is the specific inducer that weakens binding of MurR to the operator. The polypeptide is HTH-type transcriptional regulator MurR (Escherichia coli O139:H28 (strain E24377A / ETEC)).